We begin with the raw amino-acid sequence, 345 residues long: Holliday junction branch migration complex subunit RuvB (345 aa).

Residues 4–185 form a large ATPase domain (RuvB-L) region; it reads LDNRFVTPLS…FGVLCPMEFY (182 aa). Residues Leu-24, Arg-25, Gly-66, Lys-69, Thr-70, Thr-71, 132 to 134, Arg-175, Tyr-185, and Arg-222 each bind ATP; that span reads EDY. Thr-70 is a binding site for Mg(2+). The small ATPAse domain (RuvB-S) stretch occupies residues 186–256; the sequence is NEEELKDIIV…MTNKALNLLE (71 aa). The tract at residues 259–345 is head domain (RuvB-H); the sequence is KEGFDSIDTK…ENINQYKFKI (87 aa). DNA contacts are provided by Arg-314 and Arg-319.

Belongs to the RuvB family. In terms of assembly, homohexamer. Forms an RuvA(8)-RuvB(12)-Holliday junction (HJ) complex. HJ DNA is sandwiched between 2 RuvA tetramers; dsDNA enters through RuvA and exits via RuvB. An RuvB hexamer assembles on each DNA strand where it exits the tetramer. Each RuvB hexamer is contacted by two RuvA subunits (via domain III) on 2 adjacent RuvB subunits; this complex drives branch migration. In the full resolvosome a probable DNA-RuvA(4)-RuvB(12)-RuvC(2) complex forms which resolves the HJ.

The protein resides in the cytoplasm. It carries out the reaction ATP + H2O = ADP + phosphate + H(+). The RuvA-RuvB-RuvC complex processes Holliday junction (HJ) DNA during genetic recombination and DNA repair, while the RuvA-RuvB complex plays an important role in the rescue of blocked DNA replication forks via replication fork reversal (RFR). RuvA specifically binds to HJ cruciform DNA, conferring on it an open structure. The RuvB hexamer acts as an ATP-dependent pump, pulling dsDNA into and through the RuvAB complex. RuvB forms 2 homohexamers on either side of HJ DNA bound by 1 or 2 RuvA tetramers; 4 subunits per hexamer contact DNA at a time. Coordinated motions by a converter formed by DNA-disengaged RuvB subunits stimulates ATP hydrolysis and nucleotide exchange. Immobilization of the converter enables RuvB to convert the ATP-contained energy into a lever motion, pulling 2 nucleotides of DNA out of the RuvA tetramer per ATP hydrolyzed, thus driving DNA branch migration. The RuvB motors rotate together with the DNA substrate, which together with the progressing nucleotide cycle form the mechanistic basis for DNA recombination by continuous HJ branch migration. Branch migration allows RuvC to scan DNA until it finds its consensus sequence, where it cleaves and resolves cruciform DNA. This chain is Holliday junction branch migration complex subunit RuvB, found in Clostridium tetani (strain Massachusetts / E88).